The sequence spans 782 residues: Cleavage and polyadenylation specificity factor subunit 2 (782 aa).

Basic and acidic residues predominate over residues 407 to 416; that stretch reads KKLEQSKEAD. A disordered region spans residues 407–449; the sequence is KKLEQSKEADIDSSDESDIEEDIDQPSAHKTKHDLMMKGEGSR. Positions 417–430 are enriched in acidic residues; the sequence is IDSSDESDIEEDID. 3 positions are modified to phosphoserine: serine 419, serine 420, and serine 423. Positions 439 to 449 are enriched in basic and acidic residues; the sequence is HDLMMKGEGSR. Serine 660 carries the post-translational modification Phosphoserine.

This sequence belongs to the metallo-beta-lactamase superfamily. RNA-metabolizing metallo-beta-lactamase-like family. CPSF2/YSH1 subfamily. As to quaternary structure, component of the cleavage and polyadenylation specificity factor (CPSF) complex, composed of CPSF1, CPSF2, CPSF3, CPSF4 and FIP1L1. Interacts with CPSF3, CSTF2 and SYMPK. Interacts with ZC3H3.

The protein resides in the nucleus. Functionally, component of the cleavage and polyadenylation specificity factor (CPSF) complex that play a key role in pre-mRNA 3'-end formation, recognizing the AAUAAA signal sequence and interacting with poly(A) polymerase and other factors to bring about cleavage and poly(A) addition. Involved in the histone 3' end pre-mRNA processing. This Homo sapiens (Human) protein is Cleavage and polyadenylation specificity factor subunit 2 (CPSF2).